The chain runs to 181 residues: UPF0340 protein OB2986 (181 aa).

The protein belongs to the UPF0340 family.

The protein is UPF0340 protein OB2986 of Oceanobacillus iheyensis (strain DSM 14371 / CIP 107618 / JCM 11309 / KCTC 3954 / HTE831).